The sequence spans 397 residues: Translocase of chloroplast 34 homolog, chloroplastic (397 aa).

Positions 1-72 are disordered; that stretch reads MAQPPRPAEE…SQPWAGLNRL (72 aa). 2 stretches are compositionally biased toward acidic residues: residues 10–32 and 44–63; these read EYDDDVQEDEDELKEGELDDDES and AGDEEAEDDEQDEEDGDEDS. The AIG1-type G domain occupies 90-321; sequence RKQLTVLLLG…YKYHPRLSSK (232 aa). The interval 99-106 is G1; the sequence is GKSSVGKS. GTP-binding positions include 102–107 and 121–126; these read SVGKSS and QAFKLQ. Residue Ser106 coordinates Mg(2+). The tract at residues 121–124 is homodimerization; sequence QAFK. Positions 126-130 are G2; the sequence is QADTD. Residues 155–158 form a G3 region; sequence DTCG. The segment at 193-198 is homodimerization; the sequence is RLDLYR. The interval 227–230 is G4; it reads THAN. Residues His228 and 271–272 each bind GTP; that span reads EN. Residues 271–273 form a G5 region; that stretch reads ENS. The chain crosses the membrane as a helical span at residues 329-349; that stretch reads LLPVAIAAEVLFYRRFLHPRL. The AKR2A-binding sequence (ABS) required for chloroplast outer envelope membrane targeting signature appears at 350-358; sequence DDNQRRVER.

The protein belongs to the TRAFAC class TrmE-Era-EngA-EngB-Septin-like GTPase superfamily. AIG1/Toc34/Toc159-like paraseptin GTPase family. TOC34 subfamily. Homodimer, heterodimer with other TOC proteins, and monomer. Part of the TOC core complex that includes 1 protein for the specific recognition of transit peptides surrounded by a ring composed of four proteins forming translocation channels, and four to five GTP-binding proteins providing energy. This core complex can interact with components of the TIC complex to form a larger import complex. Interacts with ARSA1. The cofactor is Mg(2+).

The protein resides in the plastid. It is found in the chloroplast outer membrane. Functionally, GTPase involved in protein precursor import into chloroplasts. Seems to recognize chloroplast-destined precursor proteins and regulate their presentation to the translocation channel through GTP hydrolysis. Functions as an essential component of the outer chloroplast membrane translocon (TOC) complex, which, in turn, catalyzes the import of nucleus-encoded precursor polypeptides from the cytoplasm to the chloroplast. In Chlamydomonas reinhardtii (Chlamydomonas smithii), this protein is Translocase of chloroplast 34 homolog, chloroplastic.